We begin with the raw amino-acid sequence, 376 residues long: uncharacterized protein (376 aa).

The helical transmembrane segment at 24–44 threads the bilayer; the sequence is YLSIISIISVFLLNSSIVYSC. His-251 contributes to the Zn(2+) binding site.

It belongs to the peptidase M23B family. Zn(2+) is required as a cofactor.

The protein resides in the cell membrane. This is an uncharacterized protein from Buchnera aphidicola subsp. Baizongia pistaciae (strain Bp).